The sequence spans 445 residues: Argininosuccinate synthase (445 aa).

ATP is bound by residues 17-25 and alanine 43; that span reads AFSGGLDTS. Tyrosine 99 serves as a coordination point for L-citrulline. 2 residues coordinate ATP: glycine 129 and threonine 131. L-aspartate contacts are provided by threonine 131, asparagine 135, and aspartate 136. Asparagine 135 contributes to the L-citrulline binding site. Aspartate 136 lines the ATP pocket. L-citrulline-binding residues include arginine 139 and serine 192. ATP is bound at residue aspartate 194. Threonine 201, glutamate 203, and glutamate 280 together coordinate L-citrulline.

The protein belongs to the argininosuccinate synthase family. Type 2 subfamily. In terms of assembly, homotetramer.

The protein localises to the cytoplasm. It catalyses the reaction L-citrulline + L-aspartate + ATP = 2-(N(omega)-L-arginino)succinate + AMP + diphosphate + H(+). The protein operates within amino-acid biosynthesis; L-arginine biosynthesis; L-arginine from L-ornithine and carbamoyl phosphate: step 2/3. The polypeptide is Argininosuccinate synthase (Acidobacterium capsulatum (strain ATCC 51196 / DSM 11244 / BCRC 80197 / JCM 7670 / NBRC 15755 / NCIMB 13165 / 161)).